The following is a 132-amino-acid chain: Large ribosomal subunit protein uL22 (132 aa).

The protein belongs to the universal ribosomal protein uL22 family. In terms of assembly, part of the 50S ribosomal subunit.

Its function is as follows. This protein binds specifically to 23S rRNA; its binding is stimulated by other ribosomal proteins, e.g. L4, L17, and L20. It is important during the early stages of 50S assembly. It makes multiple contacts with different domains of the 23S rRNA in the assembled 50S subunit and ribosome. Functionally, the globular domain of the protein is located near the polypeptide exit tunnel on the outside of the subunit, while an extended beta-hairpin is found that lines the wall of the exit tunnel in the center of the 70S ribosome. This chain is Large ribosomal subunit protein uL22, found in Pelagibacter ubique (strain HTCC1062).